A 223-amino-acid polypeptide reads, in one-letter code: Deoxyribose-phosphate aldolase (223 aa).

D91 acts as the Proton donor/acceptor in catalysis. K153 serves as the catalytic Schiff-base intermediate with acetaldehyde. Catalysis depends on K182, which acts as the Proton donor/acceptor.

The protein belongs to the DeoC/FbaB aldolase family. DeoC type 1 subfamily.

It is found in the cytoplasm. The catalysed reaction is 2-deoxy-D-ribose 5-phosphate = D-glyceraldehyde 3-phosphate + acetaldehyde. It participates in carbohydrate degradation; 2-deoxy-D-ribose 1-phosphate degradation; D-glyceraldehyde 3-phosphate and acetaldehyde from 2-deoxy-alpha-D-ribose 1-phosphate: step 2/2. Catalyzes a reversible aldol reaction between acetaldehyde and D-glyceraldehyde 3-phosphate to generate 2-deoxy-D-ribose 5-phosphate. This is Deoxyribose-phosphate aldolase from Streptococcus pyogenes serotype M12 (strain MGAS2096).